A 238-amino-acid chain; its full sequence is MQNLDPQELEKFEKMAKSWWDPNGDFKPIHQLNPTRLQYIQQQANGLTEKKVLDVGCGGGILSEAMAKQGAIVTGIDMTVAPLEVARLHAKEQGLVIDYQQITVEEFLQKQTALYAEKFDVITCMEMLEHVPDPLSIIQSCRALLKPNGVLFFSTINRTFKAWALVVLGAEYILKMLPKGTHDYDKFIKPAELLHWTDQANLVCKNICGYHYNLLTGKFWLNQDVSANYMATFQHKSI.

R36, G56, D77, and M125 together coordinate S-adenosyl-L-methionine.

The protein belongs to the methyltransferase superfamily. UbiG/COQ3 family.

It carries out the reaction a 3-demethylubiquinol + S-adenosyl-L-methionine = a ubiquinol + S-adenosyl-L-homocysteine + H(+). It catalyses the reaction a 3-(all-trans-polyprenyl)benzene-1,2-diol + S-adenosyl-L-methionine = a 2-methoxy-6-(all-trans-polyprenyl)phenol + S-adenosyl-L-homocysteine + H(+). Its pathway is cofactor biosynthesis; ubiquinone biosynthesis. Its function is as follows. O-methyltransferase that catalyzes the 2 O-methylation steps in the ubiquinone biosynthetic pathway. This Histophilus somni (strain 2336) (Haemophilus somnus) protein is Ubiquinone biosynthesis O-methyltransferase.